A 354-amino-acid polypeptide reads, in one-letter code: Serum paraoxonase/lactonase 3 (354 aa).

A disulfide bridge links Cys42 with Cys352. N-linked (GlcNAc...) asparagine glycosylation occurs at Asn50. Residues Glu53 and Asp54 each contribute to the Ca(2+) site. The Proton acceptor role is filled by His114. Ile116 is a binding site for Ca(2+). Ser165 bears the Phosphoserine mark. Asn167, Asp168, Asn223, Asp268, and Asn269 together coordinate Ca(2+). N-linked (GlcNAc...) asparagine glycans are attached at residues Asn269 and Asn323.

Belongs to the paraoxonase family. Homodimer. It depends on Ca(2+) as a cofactor. Post-translationally, glycosylated. In terms of processing, the signal sequence is not cleaved.

The protein localises to the secreted. Its subcellular location is the extracellular space. It catalyses the reaction a phenyl acetate + H2O = a phenol + acetate + H(+). It carries out the reaction An aryl dialkyl phosphate + H2O = dialkyl phosphate + an aryl alcohol.. The catalysed reaction is an N-acyl-L-homoserine lactone + H2O = an N-acyl-L-homoserine + H(+). Its function is as follows. Has low activity towards the organophosphate paraxon and aromatic carboxylic acid esters. Rapidly hydrolyzes lactones such as statin prodrugs (e.g. lovastatin). Hydrolyzes aromatic lactones and 5- or 6-member ring lactones with aliphatic substituents but not simple lactones or those with polar substituents. The protein is Serum paraoxonase/lactonase 3 (Pon3) of Mus musculus (Mouse).